We begin with the raw amino-acid sequence, 180 residues long: Oligoribonuclease (180 aa).

The 164-residue stretch at 7–170 (LIWIDLEMTG…DDIRESIAEL (164 aa)) folds into the Exonuclease domain. Residue Tyr-128 is part of the active site.

Belongs to the oligoribonuclease family.

It is found in the cytoplasm. 3'-to-5' exoribonuclease specific for small oligoribonucleotides. The sequence is that of Oligoribonuclease from Pseudomonas paraeruginosa (strain DSM 24068 / PA7) (Pseudomonas aeruginosa (strain PA7)).